The primary structure comprises 378 residues: MDWLRTKRIRAKKRKRNVKENGEVVLKELIECCDGKCNPIKNFSYDQIIKATNNFCQSNRASRIDVYYRCYKGMLDDRPVLIKKGKYTLDMKEICRDIAISSMVSGHKNFLKLLGCCLEFTPPVLVFEYAEVITLGPLLTSHPGYLRRIKIAREVANALTYLHTAFSRVFIHSNLDPFTIFLDGNGVAKLGNFCNCITIPEGETFVHDDTLQKYHELRHNTLKGTHGLGVCNLPVIDPDYKSTGKVTTKTDMHSFGGFMLALVQIREVDDELSLSSDMLRALADLFIKPYDDVRYVHFPLHHHVSKILRKFGYAEVVDSDMSEVAAWPIKAFLRLALRCIGCKLGDPLSSMIQVTKELRLIEKSAYYPSNNRSQMSSI.

The 345-residue stretch at 34 to 378 folds into the Protein kinase domain; it reads DGKCNPIKNF…SNNRSQMSSI (345 aa). Residues 40–48 and K83 contribute to the ATP site; that span reads IKNFSYDQI.

The protein belongs to the protein kinase superfamily. Ser/Thr protein kinase family. ZRK subfamily. In terms of assembly, interacts with RPP13L4/ZAR1.

In Arabidopsis thaliana (Mouse-ear cress), this protein is Non-functional pseudokinase ZRK6.